The primary structure comprises 347 residues: WAT1-related protein At4g15540 (347 aa).

10 helical membrane passes run 15–35 (VVPF…SILY), 47–67 (VFVF…SLIF), 73–93 (LPTA…LGLT), 108–128 (TLSS…AIFF), 139–159 (ATQA…VIVL), 178–198 (WIIG…WFIL), 210–230 (IAVV…VCLL), 243–263 (GFSL…GSVI), 276–296 (ISLF…IFLG), and 299–319 (LHLG…TVIW). An EamA 1 domain is found at 30–158 (GSSILYKAAT…VSISGALVIV (129 aa)). The region spanning 216–317 (YNLCATLISG…VILSFGFYTV (102 aa)) is the EamA 2 domain.

Belongs to the drug/metabolite transporter (DMT) superfamily. Plant drug/metabolite exporter (P-DME) (TC 2.A.7.4) family.

The protein resides in the membrane. This chain is WAT1-related protein At4g15540, found in Arabidopsis thaliana (Mouse-ear cress).